Consider the following 181-residue polypeptide: 3-hexulose-6-phosphate isomerase (181 aa).

The 142-residue stretch at 27–168 (ILSLVDAAGR…IAKLVDQKGL (142 aa)) folds into the SIS domain. Substrate-binding positions include serine 45 and 84 to 89 (SGSGST). The Proton acceptor role is filled by glutamate 148.

Belongs to the SIS family. PHI subfamily. Homodimer.

It catalyses the reaction D-arabino-hex-3-ulose 6-phosphate = beta-D-fructose 6-phosphate. It participates in one-carbon metabolism; formaldehyde assimilation via RuMP pathway; D-fructose 6-phosphate from D-ribulose 5-phosphate and formaldehyde: step 2/2. Catalyzes the isomerization between 3-hexulose 6-phosphate and fructose 6-phosphate. This chain is 3-hexulose-6-phosphate isomerase (rmpB), found in Methylomonas aminofaciens.